We begin with the raw amino-acid sequence, 265 residues long: Indole-3-glycerol phosphate synthase (265 aa).

This sequence belongs to the TrpC family.

The catalysed reaction is 1-(2-carboxyphenylamino)-1-deoxy-D-ribulose 5-phosphate + H(+) = (1S,2R)-1-C-(indol-3-yl)glycerol 3-phosphate + CO2 + H2O. It participates in amino-acid biosynthesis; L-tryptophan biosynthesis; L-tryptophan from chorismate: step 4/5. The protein is Indole-3-glycerol phosphate synthase of Xanthomonas oryzae pv. oryzae (strain PXO99A).